The following is a 354-amino-acid chain: Erythroferrone (354 aa).

An N-terminal signal peptide occupies residues M1–G28. Composition is skewed to low complexity over residues G26–R37 and P51–A62. The interval G26–P123 is disordered. The segment covering T69–D80 has biased composition (basic and acidic residues). The span at N94 to K107 shows a compositional bias: basic residues. P111, P113, P114, P116, P117, and P119 each carry hydroxyproline. Pro residues predominate over residues P111–P123. Residues A199–V354 enclose the C1q domain. Residues N243, N295, and N333 are each glycosylated (N-linked (GlcNAc...) asparagine).

It belongs to the adipolin/erythroferrone family. Homodimer; disulfide-linked. Forms trimer, hexamers and higher molecular weight oligomers. May form heteromeric complexes with C1QTNF2 and C1QTNF12 and, to a lesser extent, with C1QTNF5 and C1QTNF10. Interacts with BMP5 and BMP7; the interaction inhibits BMP-induced transcription of HAMP. Interacts with BMP6; the interaction inhibits BMP-induced transcription of HAMP. Interacts with BMP2. Interacts with heterodimers composed of BMP2 and BMP6 in vitro, the interaction inhibits the heterodimer binding to its receptor BMPR1A /ALK3 and thereby suppresses expression of HAMP. Post-translationally, N-glycosylated; required for secretion of the mature protein.

The protein localises to the secreted. Iron-regulatory hormone that acts as an erythroid regulator after hemorrhage: produced by erythroblasts following blood loss and mediates suppression of hepcidin (HAMP) expression in the liver, thereby promoting increased iron absorption and mobilization from stores. Promotes lipid uptake into adipocytes and hepatocytes via transcriptional up-regulation of genes involved in fatty acid uptake. Inhibits apoptosis and inflammatory response in cardiomyocytes via promotion of sphingosine-1-phosphate (S1P) and cAMP-dependent activation of AKT signaling. Inhibits autophagy induced by nutrient deficiency in hepatocytes via promoting the phosphorylation of IRS1, AKT, and MTOR, and thereby subsequent activation of the AKT-MTOR signaling pathway. Negatively regulates the differentiation of osteoblasts, potentially via sequestering BMP2, and thereby inhibits the activation of SMAD signaling. The reduction in BMP2 signaling in osteoblasts also results in an increase in expression of the osteoclastogenesis-promoting factors TNFSF11/RANKL and SOST, thereby indirectly promotes bone resorption. In Homo sapiens (Human), this protein is Erythroferrone.